A 427-amino-acid polypeptide reads, in one-letter code: Tryptophan synthase beta chain (427 aa).

The residue at position 100 (Lys-100) is an N6-(pyridoxal phosphate)lysine.

Belongs to the TrpB family. In terms of assembly, tetramer of two alpha and two beta chains. Pyridoxal 5'-phosphate serves as cofactor.

The enzyme catalyses (1S,2R)-1-C-(indol-3-yl)glycerol 3-phosphate + L-serine = D-glyceraldehyde 3-phosphate + L-tryptophan + H2O. It functions in the pathway amino-acid biosynthesis; L-tryptophan biosynthesis; L-tryptophan from chorismate: step 5/5. In terms of biological role, the beta subunit is responsible for the synthesis of L-tryptophan from indole and L-serine. This Streptomyces coelicolor (strain ATCC BAA-471 / A3(2) / M145) protein is Tryptophan synthase beta chain (trpB).